The primary structure comprises 55 residues: Large ribosomal subunit protein bL33 (55 aa).

A compositionally biased stretch (basic and acidic residues) spans 1–11 (MAKSGRDKIKL). The interval 1–28 (MAKSGRDKIKLESTAGTGHFYTTTKNKR) is disordered. Over residues 14 to 24 (TAGTGHFYTTT) the composition is skewed to polar residues.

This sequence belongs to the bacterial ribosomal protein bL33 family.

This is Large ribosomal subunit protein bL33 from Janthinobacterium sp. (strain Marseille) (Minibacterium massiliensis).